The sequence spans 490 residues: Keratin, type II cytoskeletal 8 (490 aa).

The segment covering 1–27 (MSIRVTQKSYKMSTSGPRAFSSRSFTS) has biased composition (polar residues). The interval 1–48 (MSIRVTQKSYKMSTSGPRAFSSRSFTSGPGARISSSSFSRVGSSSSSF) is disordered. Residues 1 to 96 (MSIRVTQKSY…DPNIQAVRTQ (96 aa)) are head. Ser-9 carries the post-translational modification Phosphoserine; by PKC/PRKCE. Residue Lys-11 forms a Glycyl lysine isopeptide (Lys-Gly) (interchain with G-Cter in SUMO2) linkage. A phosphoserine mark is found at Ser-13, Ser-15, Ser-21, and Ser-22. At Arg-23 the chain carries Omega-N-methylarginine. Position 24 is a phosphoserine; by PKC/PRKCE (Ser-24). Thr-26 carries the phosphothreonine modification. At Ser-27 the chain carries Phosphoserine. Arg-32 carries the omega-N-methylarginine modification. A phosphoserine mark is found at Ser-34, Ser-37, and Ser-39. The segment covering 34–48 (SSSSFSRVGSSSSSF) has biased composition (low complexity). Position 40 is an omega-N-methylarginine (Arg-40). Phosphoserine is present on residues Ser-43, Ser-44, and Ser-47. Arg-49 is modified (asymmetric dimethylarginine; alternate). Arg-49 bears the Omega-N-methylarginine; alternate mark. Ser-51 carries the phosphoserine modification. Ser-80 bears the Phosphoserine; by MAPK mark. A coil 1A region spans residues 97–132 (EKEQIKSLNNKFASFIDKVRFLEQQNKMLETKWSLL). Residues 97–408 (EKEQIKSLNN…KLLEGEESRL (312 aa)) form the IF rod domain. At Lys-107 the chain carries N6-malonyllysine. Residues Lys-128 and Lys-136 each participate in a glycyl lysine isopeptide (Lys-Gly) (interchain with G-Cter in SUMO2) cross-link. The interval 133–149 (QQQKTSRSNMDNMFESY) is linker 1. The segment at 150–241 (INNLRRQLEA…QIHEEEIREL (92 aa)) is coil 1B. Lys-203 participates in a covalent cross-link: Glycyl lysine isopeptide (Lys-Gly) (interchain with G-Cter in SUMO1); alternate. A Glycyl lysine isopeptide (Lys-Gly) (interchain with G-Cter in SUMO2); alternate cross-link involves residue Lys-203. Lys-213 carries the post-translational modification N6-acetyllysine. The tract at residues 242-265 (QSQISDTSVVLSMDNSRSLDMDGI) is linker 12. A phosphoserine mark is found at Ser-259 and Ser-280. A coil 2 region spans residues 266 to 403 (IAEVRAQYED…ITTYRKLLEG (138 aa)). The segment at 267-387 (AEVRAQYEDI…REYQELMNVK (121 aa)) is necessary for interaction with PNN. A Glycyl lysine isopeptide (Lys-Gly) (interchain with G-Cter in SUMO2) cross-link involves residue Lys-291. Lys-301 participates in a covalent cross-link: Glycyl lysine isopeptide (Lys-Gly) (interchain with G-Cter in SUMO2); alternate. Lys-301 bears the N6-acetyllysine; alternate mark. Lys-310 participates in a covalent cross-link: Glycyl lysine isopeptide (Lys-Gly) (interchain with G-Cter in SUMO2). Residue Lys-331 forms a Glycyl lysine isopeptide (Lys-Gly) (interchain with G-Cter in SUMO2); alternate linkage. The residue at position 331 (Lys-331) is an N6-acetyllysine; alternate. Ser-336 carries the post-translational modification Phosphoserine. A Glycyl lysine isopeptide (Lys-Gly) (interchain with G-Cter in SUMO2) cross-link involves residue Lys-399. The tail stretch occupies residues 404–490 (EESRLESGMQ…VSESSDVVSK (87 aa)). Phosphoserine is present on residues Ser-406, Ser-410, Ser-416, Ser-423, Ser-430, Ser-432, and Ser-438. Residue Lys-479 forms a Glycyl lysine isopeptide (Lys-Gly) (interchain with G-Cter in SUMO1); alternate linkage. Residue Lys-479 forms a Glycyl lysine isopeptide (Lys-Gly) (interchain with G-Cter in SUMO2); alternate linkage. Phosphoserine occurs at positions 482, 484, 485, and 489.

This sequence belongs to the intermediate filament family. As to quaternary structure, heterotetramer of two type I and two type II keratins. Forms a heterodimer with KRT18. Associates with KRT20. Interacts with PLEC isoform 1C, when in a heterodimer with KRT18. Interacts with PNN. When associated with KRT19, interacts with DMD. Interacts with TCHP. Interacts with APEX1. Interacts with GPER1. Interacts with EPPK1. Interacts with PKP1 and PKP2. Phosphorylation on serine residues is enhanced during EGF stimulation and mitosis. Ser-80 phosphorylation plays an important role in keratin filament reorganization. Post-translationally, O-glycosylated. O-GlcNAcylation at multiple sites increases solubility, and decreases stability by inducing proteasomal degradation. In terms of processing, O-glycosylated (O-GlcNAcylated), in a cell cycle-dependent manner. As to expression, expressed in abundance in the epithelia of colon, bladder, ileum, and stomach, with lower expression observed in earskin (at protein level). Also expressed in pancreas, liver, dudenum and jejunum.

The protein resides in the cytoplasm. The protein localises to the nucleus. Its subcellular location is the nucleoplasm. It localises to the nucleus matrix. Its function is as follows. Together with KRT19, helps to link the contractile apparatus to dystrophin at the costameres of striated muscle. This is Keratin, type II cytoskeletal 8 (Krt8) from Mus musculus (Mouse).